A 231-amino-acid polypeptide reads, in one-letter code: Large ribosomal subunit protein uL1 (231 aa).

It belongs to the universal ribosomal protein uL1 family. As to quaternary structure, part of the 50S ribosomal subunit.

In terms of biological role, binds directly to 23S rRNA. The L1 stalk is quite mobile in the ribosome, and is involved in E site tRNA release. Functionally, protein L1 is also a translational repressor protein, it controls the translation of the L11 operon by binding to its mRNA. This Acinetobacter baumannii (strain AB0057) protein is Large ribosomal subunit protein uL1.